The chain runs to 816 residues: Acyl-homoserine lactone acylase QuiP (816 aa).

The first 33 residues, 1–33 (MASPALSHFLPRFGVAAAVAGVLSLTGCQTWNA), serve as a signal peptide directing secretion. Ser-262 serves as the catalytic Nucleophile.

This sequence belongs to the peptidase S45 family. In terms of assembly, heterodimer of an alpha subunit and a beta subunit processed from the same precursor.

It localises to the periplasm. It catalyses the reaction an N-acyl-L-homoserine lactone + H2O = L-homoserine lactone + a carboxylate. Functionally, catalyzes the deacylation of acyl-homoserine lactone (AHL or acyl-HSL), releasing homoserine lactone (HSL) and the corresponding fatty acid. Possesses a specificity for the degradation of long-chain acyl-HSLs (side chains of seven or more carbons in length). This chain is Acyl-homoserine lactone acylase QuiP (quiP), found in Pseudomonas fluorescens (strain Pf0-1).